The primary structure comprises 279 residues: Eukaryotic translation initiation factor 3 subunit J (279 aa).

Disordered stretches follow at residues 1-74 (MSWD…SQKS) and 229-279 (ERQA…DDFM). The segment covering 20-39 (WEDEDNDDPLLESWDIDEEE) has biased composition (acidic residues). A coiled-coil region spans residues 34-74 (DIDEEEVARKKKEEEAKKKAEKEALKQKQQEAKNKKLSQKS). Basic and acidic residues predominate over residues 40 to 67 (VARKKKEEEAKKKAEKEALKQKQQEAKN). Over residues 268-279 (DDFDDFDDDDFM) the composition is skewed to acidic residues.

This sequence belongs to the eIF-3 subunit J family. In terms of assembly, component of the eukaryotic translation initiation factor 3 (eIF-3) complex.

The protein localises to the cytoplasm. Its function is as follows. Component of the eukaryotic translation initiation factor 3 (eIF-3) complex, which is involved in protein synthesis of a specialized repertoire of mRNAs and, together with other initiation factors, stimulates binding of mRNA and methionyl-tRNAi to the 40S ribosome. The eIF-3 complex specifically targets and initiates translation of a subset of mRNAs involved in cell proliferation. The sequence is that of Eukaryotic translation initiation factor 3 subunit J from Meyerozyma guilliermondii (strain ATCC 6260 / CBS 566 / DSM 6381 / JCM 1539 / NBRC 10279 / NRRL Y-324) (Yeast).